The chain runs to 277 residues: MKSFTFLILFLFAAQSISVYAGSFHKDVKIHWGDGRGKIHDNQGKLLSLSLDKSSGSGFQSNQEFLYGKAEVQMKLVPGNSAGTVTTFYLKSPGTTWDEIDFEFLGNISGHPYTLHTNVYTKGSGDKEQQFHLWFDPTANFHTYCITWNPQRIIFTVDGIPIREFMNAESRGVPFPTKQPMRLYASLWEAEHWATRGGLEKTDWSKAPFTAYYRNYNVEGCVWVNGKSVCPANSQWFTQKLDSNGQTRMKGVQSKYMVYNYCSDKKRFPRGVPPECS.

Residues 1 to 21 (MKSFTFLILFLFAAQSISVYA) form the signal peptide. Positions 22–213 (GSFHKDVKIH…WSKAPFTAYY (192 aa)) constitute a GH16 domain. The active-site Nucleophile is E99. E103 functions as the Proton donor in the catalytic mechanism. E103 provides a ligand contact to xyloglucan. N107 is a glycosylation site (N-linked (GlcNAc...) asparagine). Xyloglucan is bound by residues 116–118 (HTN), 126–128 (DKE), 192–193 (HW), and G197. Cystine bridges form between C221-C230 and C262-C276. R267 contributes to the xyloglucan binding site.

Belongs to the glycosyl hydrolase 16 family. XTH group 2 subfamily. In terms of processing, contains at least one intrachain disulfide bond essential for its enzymatic activity. Root specific.

The protein localises to the secreted. It localises to the cell wall. The protein resides in the extracellular space. Its subcellular location is the apoplast. The enzyme catalyses breaks a beta-(1-&gt;4) bond in the backbone of a xyloglucan and transfers the xyloglucanyl segment on to O-4 of the non-reducing terminal glucose residue of an acceptor, which can be a xyloglucan or an oligosaccharide of xyloglucan.. Possesses xyloglucan endotransglucosylase (XET) activity in vitro. Does not possess xyloglucan endohydrolysis (XEH) activity. Cleaves and religates xyloglucan polymers, an essential constituent of the primary cell wall, and thereby participates in cell wall construction of growing tissues. Involved in cell proliferation in the tissue reunion process of wounded inflorescence stems. Maybe a downstream target of NAC071 as a consequence of auxin action in wounded stems. This is Xyloglucan endotransglucosylase/hydrolase protein 19 from Arabidopsis thaliana (Mouse-ear cress).